Consider the following 241-residue polypeptide: Orotidine 5'-phosphate decarboxylase (241 aa).

Substrate is bound by residues Asp-16, Lys-37, 64 to 73 (DLKFHDIPTT), Thr-128, Arg-190, Gln-199, Gly-219, and Arg-220. Lys-66 (proton donor) is an active-site residue.

Belongs to the OMP decarboxylase family. Type 1 subfamily. In terms of assembly, homodimer.

It catalyses the reaction orotidine 5'-phosphate + H(+) = UMP + CO2. Its pathway is pyrimidine metabolism; UMP biosynthesis via de novo pathway; UMP from orotate: step 2/2. Its function is as follows. Catalyzes the decarboxylation of orotidine 5'-monophosphate (OMP) to uridine 5'-monophosphate (UMP). The polypeptide is Orotidine 5'-phosphate decarboxylase (Prochlorococcus marinus (strain NATL1A)).